A 509-amino-acid chain; its full sequence is 2,3-bisphosphoglycerate-independent phosphoglycerate mutase (509 aa).

The Mn(2+) site is built by Asp-12 and Ser-62. Ser-62 serves as the catalytic Phosphoserine intermediate. Substrate-binding positions include His-123, 153-154 (RD), Arg-185, Arg-191, 260-263 (RPDR), and Lys-333. Asp-400, His-404, Asp-441, His-442, and His-460 together coordinate Mn(2+).

The protein belongs to the BPG-independent phosphoglycerate mutase family. As to quaternary structure, monomer. Mn(2+) serves as cofactor.

The catalysed reaction is (2R)-2-phosphoglycerate = (2R)-3-phosphoglycerate. Its pathway is carbohydrate degradation; glycolysis; pyruvate from D-glyceraldehyde 3-phosphate: step 3/5. Catalyzes the interconversion of 2-phosphoglycerate and 3-phosphoglycerate. In Clostridium botulinum (strain ATCC 19397 / Type A), this protein is 2,3-bisphosphoglycerate-independent phosphoglycerate mutase.